The sequence spans 449 residues: CCA-adding enzyme (449 aa).

ATP is bound by residues S57 and R60. CTP-binding residues include S57 and R60. Residues D69, D71, and D124 each coordinate Mg(2+). Residues H147, K167, and Y176 each coordinate ATP. H147, K167, and Y176 together coordinate CTP.

It belongs to the tRNA nucleotidyltransferase/poly(A) polymerase family. Archaeal CCA-adding enzyme subfamily. Homodimer. Mg(2+) is required as a cofactor.

It catalyses the reaction a tRNA precursor + 2 CTP + ATP = a tRNA with a 3' CCA end + 3 diphosphate. The enzyme catalyses a tRNA with a 3' CCA end + 2 CTP + ATP = a tRNA with a 3' CCACCA end + 3 diphosphate. Its function is as follows. Catalyzes the addition and repair of the essential 3'-terminal CCA sequence in tRNAs without using a nucleic acid template. Adds these three nucleotides in the order of C, C, and A to the tRNA nucleotide-73, using CTP and ATP as substrates and producing inorganic pyrophosphate. tRNA 3'-terminal CCA addition is required both for tRNA processing and repair. Also involved in tRNA surveillance by mediating tandem CCA addition to generate a CCACCA at the 3' terminus of unstable tRNAs. While stable tRNAs receive only 3'-terminal CCA, unstable tRNAs are marked with CCACCA and rapidly degraded. The polypeptide is CCA-adding enzyme (Methanocaldococcus jannaschii (strain ATCC 43067 / DSM 2661 / JAL-1 / JCM 10045 / NBRC 100440) (Methanococcus jannaschii)).